A 238-amino-acid chain; its full sequence is Ribonuclease PH (238 aa).

Phosphate contacts are provided by residues arginine 86 and 124-126 (GTR).

The protein belongs to the RNase PH family. In terms of assembly, homohexameric ring arranged as a trimer of dimers.

The enzyme catalyses tRNA(n+1) + phosphate = tRNA(n) + a ribonucleoside 5'-diphosphate. Functionally, phosphorolytic 3'-5' exoribonuclease that plays an important role in tRNA 3'-end maturation. Removes nucleotide residues following the 3'-CCA terminus of tRNAs; can also add nucleotides to the ends of RNA molecules by using nucleoside diphosphates as substrates, but this may not be physiologically important. Probably plays a role in initiation of 16S rRNA degradation (leading to ribosome degradation) during starvation. The protein is Ribonuclease PH of Salmonella gallinarum (strain 287/91 / NCTC 13346).